Consider the following 1004-residue polypeptide: 2-oxoglutarate dehydrogenase E1 component (1004 aa).

Belongs to the alpha-ketoglutarate dehydrogenase family. Homodimer. Part of the 2-oxoglutarate dehydrogenase (OGDH) complex composed of E1 (2-oxoglutarate dehydrogenase), E2 (dihydrolipoamide succinyltransferase) and E3 (dihydrolipoamide dehydrogenase); the complex contains multiple copies of the three enzymatic components (E1, E2 and E3). The cofactor is thiamine diphosphate.

It catalyses the reaction N(6)-[(R)-lipoyl]-L-lysyl-[protein] + 2-oxoglutarate + H(+) = N(6)-[(R)-S(8)-succinyldihydrolipoyl]-L-lysyl-[protein] + CO2. Functionally, E1 component of the 2-oxoglutarate dehydrogenase (OGDH) complex which catalyzes the decarboxylation of 2-oxoglutarate, the first step in the conversion of 2-oxoglutarate to succinyl-CoA and CO(2). This is 2-oxoglutarate dehydrogenase E1 component from Brucella suis (strain ATCC 23445 / NCTC 10510).